The sequence spans 668 residues: 1-deoxy-D-xylulose-5-phosphate synthase (668 aa).

Residues H105 and 146–148 each bind thiamine diphosphate; that span reads AHS. D177 contributes to the Mg(2+) binding site. Thiamine diphosphate contacts are provided by residues 178–179, N206, Y316, and E398; that span reads GA. N206 serves as a coordination point for Mg(2+).

This sequence belongs to the transketolase family. DXPS subfamily. As to quaternary structure, homodimer. Mg(2+) is required as a cofactor. Thiamine diphosphate serves as cofactor.

The enzyme catalyses D-glyceraldehyde 3-phosphate + pyruvate + H(+) = 1-deoxy-D-xylulose 5-phosphate + CO2. It functions in the pathway metabolic intermediate biosynthesis; 1-deoxy-D-xylulose 5-phosphate biosynthesis; 1-deoxy-D-xylulose 5-phosphate from D-glyceraldehyde 3-phosphate and pyruvate: step 1/1. Catalyzes the acyloin condensation reaction between C atoms 2 and 3 of pyruvate and glyceraldehyde 3-phosphate to yield 1-deoxy-D-xylulose-5-phosphate (DXP). The protein is 1-deoxy-D-xylulose-5-phosphate synthase of Nitrobacter hamburgensis (strain DSM 10229 / NCIMB 13809 / X14).